Consider the following 105-residue polypeptide: Zinc metalloproteinase/disintegrin (105 aa).

Residues 1 to 3 (DEP) form the Peptidase M12B domain. Residues 11 to 96 (PPVCGNYFVE…AECTDRFQRN (86 aa)) form the Disintegrin domain. Intrachain disulfides connect cysteine 25/cysteine 43, cysteine 27/cysteine 38, cysteine 37/cysteine 60, cysteine 51/cysteine 57, cysteine 56/cysteine 82, and cysteine 69/cysteine 89. The short motif at 75–77 (ECD) is the D/ECD-tripeptide element. A propeptide spanning residues 99 to 105 (PCQNNNG) is cleaved from the precursor.

Belongs to the venom metalloproteinase (M12B) family. P-III subfamily. Monomer. Zn(2+) is required as a cofactor. As to expression, expressed by the venom gland.

It is found in the secreted. Functionally, impairs hemostasis in the envenomed animal. Its function is as follows. Inhibits platelet aggregation induced by ADP, thrombin, platelet-activating factor and collagen. Acts by inhibiting fibrinogen interaction with platelet receptors GPIIb/GPIIIa (ITGA2B/ITGB3). This Gloydius brevicauda (Korean slamosa snake) protein is Zinc metalloproteinase/disintegrin.